We begin with the raw amino-acid sequence, 602 residues long: GTP-binding protein 2 (602 aa).

The disordered stretch occupies residues 18–64 (GPAMGGNLKARGAGGSSSCGGPKGKKKNGRNRGGKANNPPYLPPEAE). Residues 29–39 (GAGGSSSCGGP) show a composition bias toward gly residues. A compositionally biased stretch (basic residues) spans 40-50 (KGKKKNGRNRG). Residues 170–398 (FLDLRVAVLG…LNILPPLTNS (229 aa)) form the tr-type G domain. GTP contacts are provided by residues 179–186 (GNVDSGKS), 260–264 (DLAGH), and 316–319 (SKVD).

This sequence belongs to the TRAFAC class translation factor GTPase superfamily. Classic translation factor GTPase family. GTPBP1 subfamily. Predominantly expressed in thymus, spleen, and testis. Expressed at lower levels in brain, heart, lung, kidney, and skeletal muscle. In testis, specifically expressed in spermatocytes and round spermatids.

The sequence is that of GTP-binding protein 2 from Mus musculus (Mouse).